The following is a 183-amino-acid chain: MKGKITLFFTALCFGLTGCIAPPKGLEKERFSINSYREISPQDLTCHCKTVRLGGKIVNTTVLANQTKIEVLSLPVSSISAKPFVELQSDGRFIVYFNGFVEPENLKERYITVGGQLAGTEKGKIEQADYTYPVVQADKYRIWTLSTTYDYPTDDWDEDDDWGFFRWRHRLWYVQPEIHYYLN.

Residues 7 to 23 (LFFTALCFGLTGCIAPP) form a helical membrane-spanning segment.

It is found in the membrane. This is an uncharacterized protein from Haemophilus influenzae (strain ATCC 51907 / DSM 11121 / KW20 / Rd).